Reading from the N-terminus, the 393-residue chain is 4-hydroxyphenylpyruvate dioxygenase (393 aa).

2 consecutive VOC domains span residues 17-148 and 179-339; these read AFDH…LLER and FLDH…IFSK. Residues His-182, His-267, and Glu-350 each contribute to the Fe cation site.

It belongs to the 4HPPD family. It depends on Fe cation as a cofactor.

The enzyme catalyses 3-(4-hydroxyphenyl)pyruvate + O2 = homogentisate + CO2. It functions in the pathway amino-acid degradation; L-phenylalanine degradation; acetoacetate and fumarate from L-phenylalanine: step 3/6. Key enzyme in the degradation of tyrosine. The protein is 4-hydroxyphenylpyruvate dioxygenase (hpd-1) of Caenorhabditis briggsae.